The following is a 186-amino-acid chain: Inosine/xanthosine triphosphatase (186 aa).

A Mg(2+)-binding site is contributed by Q75.

Belongs to the YjjX NTPase family. Homodimer. The cofactor is Mg(2+). Mn(2+) serves as cofactor.

It catalyses the reaction XTP + H2O = XDP + phosphate + H(+). The catalysed reaction is ITP + H2O = IDP + phosphate + H(+). Its function is as follows. Phosphatase that hydrolyzes non-canonical purine nucleotides such as XTP and ITP to their respective diphosphate derivatives. Probably excludes non-canonical purines from DNA/RNA precursor pool, thus preventing their incorporation into DNA/RNA and avoiding chromosomal lesions. In Shewanella baltica (strain OS185), this protein is Inosine/xanthosine triphosphatase.